The following is a 119-amino-acid chain: Phosphoribosyl-AMP cyclohydrolase (119 aa).

D77 serves as a coordination point for Mg(2+). C78 provides a ligand contact to Zn(2+). Mg(2+) contacts are provided by D79 and D81. Positions 94 and 101 each coordinate Zn(2+).

The protein belongs to the PRA-CH family. As to quaternary structure, homodimer. It depends on Mg(2+) as a cofactor. Requires Zn(2+) as cofactor.

It localises to the cytoplasm. It carries out the reaction 1-(5-phospho-beta-D-ribosyl)-5'-AMP + H2O = 1-(5-phospho-beta-D-ribosyl)-5-[(5-phospho-beta-D-ribosylamino)methylideneamino]imidazole-4-carboxamide. Its pathway is amino-acid biosynthesis; L-histidine biosynthesis; L-histidine from 5-phospho-alpha-D-ribose 1-diphosphate: step 3/9. Catalyzes the hydrolysis of the adenine ring of phosphoribosyl-AMP. The sequence is that of Phosphoribosyl-AMP cyclohydrolase from Cereibacter sphaeroides (strain ATCC 17025 / ATH 2.4.3) (Rhodobacter sphaeroides).